Here is a 673-residue protein sequence, read N- to C-terminus: DNA ligase (673 aa).

34–38 is an NAD(+) binding site; that stretch reads DAAFD. The tract at residues 54 to 73 is disordered; it reads LRRPDSPTQRVGGATAPDFA. Residues 83–84 and Glu-114 contribute to the NAD(+) site; that span reads SL. Lys-116 functions as the N6-AMP-lysine intermediate in the catalytic mechanism. Positions 137, 176, 292, and 316 each coordinate NAD(+). Zn(2+) contacts are provided by Cys-410, Cys-413, Cys-428, and Cys-433. The 80-residue stretch at 594-673 folds into the BRCT domain; it reads PAEGPLAGMT…DEFCERYLQG (80 aa).

Belongs to the NAD-dependent DNA ligase family. LigA subfamily. Requires Mg(2+) as cofactor. Mn(2+) serves as cofactor.

The enzyme catalyses NAD(+) + (deoxyribonucleotide)n-3'-hydroxyl + 5'-phospho-(deoxyribonucleotide)m = (deoxyribonucleotide)n+m + AMP + beta-nicotinamide D-nucleotide.. DNA ligase that catalyzes the formation of phosphodiester linkages between 5'-phosphoryl and 3'-hydroxyl groups in double-stranded DNA using NAD as a coenzyme and as the energy source for the reaction. It is essential for DNA replication and repair of damaged DNA. The protein is DNA ligase of Symbiobacterium thermophilum (strain DSM 24528 / JCM 14929 / IAM 14863 / T).